A 242-amino-acid polypeptide reads, in one-letter code: Transcriptional activator protein BjaR1 (242 aa).

Residues 173 to 238 (TPYPSTRLTP…HAVALAIRHK (66 aa)) enclose the HTH luxR-type domain. The H-T-H motif DNA-binding region spans 197-216 (AWEIGEILHITQRTAEEHLA).

This sequence belongs to the autoinducer-regulated transcriptional regulatory protein family.

Transcriptional activator that functions in response to the quorum-sensing autoinducer IV-HSL (isovaleryl-homoserine lactone). Activates BjaI expression. Is sensitive to IV-HSL at concentrations as low as 10 pM. This is Transcriptional activator protein BjaR1 (bjaR1) from Bradyrhizobium diazoefficiens (strain JCM 10833 / BCRC 13528 / IAM 13628 / NBRC 14792 / USDA 110).